Consider the following 369-residue polypeptide: Septin-5 (369 aa).

Phosphothreonine is present on Thr-13. The region spanning 41 to 314 is the Septin-type G domain; sequence KGFDFTLMVA…ENYRAHCIQQ (274 aa). Residues 51–58 form a G1 motif region; the sequence is GESGLGKS. Residues 51 to 58, Thr-85, and Gly-111 contribute to the GTP site; that span reads GESGLGKS. A G3 motif region spans residues 108–111; the sequence is DTPG. Residue Arg-168 is modified to Omega-N-methylarginine. The G4 motif stretch occupies residues 189-192; it reads AKAD. 190 to 198 provides a ligand contact to GTP; that stretch reads KADCLVPSE. At Ser-225 the chain carries Phosphoserine. GTP contacts are provided by Gly-248 and Arg-263. A Phosphoserine modification is found at Ser-327. Thr-336 carries the post-translational modification Phosphothreonine. The stretch at 338-369 forms a coiled coil; sequence DAETEKLIRMKDEELRRMQEMLQKMKQQMQDQ.

It belongs to the TRAFAC class TrmE-Era-EngA-EngB-Septin-like GTPase superfamily. Septin GTPase family. As to quaternary structure, septins polymerize into heterooligomeric protein complexes that form filaments, and can associate with cellular membranes, actin filaments and microtubules. GTPase activity is required for filament formation. Interacts with SEPTIN2 and SEPTIN5. Interaction with SEPTIN4 not detected. In platelets, associated with a complex containing STX4. Interacts with PRKN; this interaction leads to SEPTIN5 ubiquitination and degradation. Interacts with DYRK1A. Interacts with STX1A; in the cerebellar cortex. Post-translationally, phosphorylated by DYRK1A.

The protein resides in the cytoplasm. It is found in the cytoskeleton. Filament-forming cytoskeletal GTPase. Involved in cytokinesis (Potential). May play a role in platelet secretion. The protein is Septin-5 of Mus musculus (Mouse).